The following is a 621-amino-acid chain: tRNA uridine 5-carboxymethylaminomethyl modification enzyme MnmG (621 aa).

9 to 14 (GGGHAG) contributes to the FAD binding site. 270 to 284 (GPRYCPSIEDKIVKF) contributes to the NAD(+) binding site.

This sequence belongs to the MnmG family. Homodimer. Heterotetramer of two MnmE and two MnmG subunits. It depends on FAD as a cofactor.

It localises to the cytoplasm. Functionally, NAD-binding protein involved in the addition of a carboxymethylaminomethyl (cmnm) group at the wobble position (U34) of certain tRNAs, forming tRNA-cmnm(5)s(2)U34. The protein is tRNA uridine 5-carboxymethylaminomethyl modification enzyme MnmG of Borreliella afzelii (strain PKo) (Borrelia afzelii).